We begin with the raw amino-acid sequence, 246 residues long: Probable transcriptional regulatory protein YebC (246 aa).

The disordered stretch occupies residues 1-20; that stretch reads MAGHSKWANTRHRKAAQDAK.

It belongs to the TACO1 family.

It localises to the cytoplasm. The chain is Probable transcriptional regulatory protein YebC from Shigella flexneri.